The following is a 626-amino-acid chain: ATP-dependent zinc metalloprotease FtsH (626 aa).

Over 1–7 the chain is Cytoplasmic; the sequence is MNGNRPN. The chain crosses the membrane as a helical span at residues 8–28; the sequence is YISLIFAALVILSLFWLVRSF. Over 29–108 the chain is Periplasmic; that stretch reads YFDTSAPSKM…VTGEKGVSSS (80 aa). A helical membrane pass occupies residues 109-129; sequence FWVNVIGNVIFIGFLLFMFFF. Over 130 to 626 the chain is Cytoplasmic; sequence MMRTISGRNN…RAAAGSEQDS (497 aa). ATP is bound at residue 202–209; sequence GPPGTGKT. Histidine 424 lines the Zn(2+) pocket. Glutamate 425 is an active-site residue. Zn(2+) contacts are provided by histidine 428 and aspartate 501.

In the central section; belongs to the AAA ATPase family. This sequence in the C-terminal section; belongs to the peptidase M41 family. In terms of assembly, homohexamer. The cofactor is Zn(2+).

It is found in the cell inner membrane. Functionally, acts as a processive, ATP-dependent zinc metallopeptidase for both cytoplasmic and membrane proteins. Plays a role in the quality control of integral membrane proteins. The polypeptide is ATP-dependent zinc metalloprotease FtsH (Pseudothermotoga lettingae (strain ATCC BAA-301 / DSM 14385 / NBRC 107922 / TMO) (Thermotoga lettingae)).